The following is a 101-amino-acid chain: Putative pterin-4-alpha-carbinolamine dehydratase (101 aa).

This sequence belongs to the pterin-4-alpha-carbinolamine dehydratase family.

The catalysed reaction is (4aS,6R)-4a-hydroxy-L-erythro-5,6,7,8-tetrahydrobiopterin = (6R)-L-erythro-6,7-dihydrobiopterin + H2O. This Ralstonia nicotianae (strain ATCC BAA-1114 / GMI1000) (Ralstonia solanacearum) protein is Putative pterin-4-alpha-carbinolamine dehydratase (phhB).